The following is an 88-amino-acid chain: MAEAEKTVRTLTGRVVSDKMDKTITVLIERRVKHPIYGKYVKRSTKLHAHDETNQCHIGDKVTIRETRPLAKTKSWALVDVLERAVEV.

It belongs to the universal ribosomal protein uS17 family. Part of the 30S ribosomal subunit.

Its function is as follows. One of the primary rRNA binding proteins, it binds specifically to the 5'-end of 16S ribosomal RNA. This chain is Small ribosomal subunit protein uS17, found in Pseudomonas fluorescens (strain SBW25).